A 242-amino-acid chain; its full sequence is Transcriptional regulatory protein GltR (242 aa).

The Response regulatory domain maps to 7–123 (SILLVDDDQE…ELLARIKALL (117 aa)). The residue at position 56 (Asp56) is a 4-aspartylphosphate. Residues 134 to 234 (GDVLAFEDWR…VRGSGYLLAA (101 aa)) constitute a DNA-binding region (ompR/PhoB-type).

Post-translationally, phosphorylated by GtrS.

It is found in the cytoplasm. With respect to regulation, phosphorylation of GltR induces its dissociation from DNA leading to transcriptional activation. In terms of biological role, member of the two-component regulatory system GtrS/GltR involved in the regulation of glucose metabolism and transport, as well as regulation of the exotoxin A gene expression. GltR controls the transcription of genes involved in glucose metabolism (glk and edd/gap-1) and transport (oprB) as well as the expression of toxA that encodes exotoxin A, the primary virulence factor. Acts as a repressor that is released from its target operators upon phosphorylation. Contributes to modulation of the type III secretion system (T3SS) in response to host cells via the regulation of the OprB transport system. The chain is Transcriptional regulatory protein GltR from Pseudomonas aeruginosa (strain ATCC 15692 / DSM 22644 / CIP 104116 / JCM 14847 / LMG 12228 / 1C / PRS 101 / PAO1).